We begin with the raw amino-acid sequence, 387 residues long: Acetylserotonin O-methyltransferase (387 aa).

S-adenosyl-L-methionine-binding positions include Y153, W170, E216, G246–F248, and R263. Catalysis depends on H266, which acts as the Proton donor/acceptor. Residues D267 and Q317 each coordinate substrate. The segment at A355–D387 is disordered. Positions R356–E370 are enriched in gly residues.

This sequence belongs to the class I-like SAM-binding methyltransferase superfamily. Cation-independent O-methyltransferase family. Homodimer.

The catalysed reaction is N-acetylserotonin + S-adenosyl-L-methionine = melatonin + S-adenosyl-L-homocysteine + H(+). The protein operates within aromatic compound metabolism; melatonin biosynthesis; melatonin from serotonin: step 1/2. Catalyzes the transfer of a methyl group onto N-acetylserotonin, producing melatonin (N-acetyl-5-methoxytryptamine). This chain is Acetylserotonin O-methyltransferase (Asmt), found in Mus musculus molossinus (Japanese house mouse).